The sequence spans 441 residues: Lysine histidine transporter-like 2 (441 aa).

At 1 to 32 the chain is on the cytoplasmic side; the sequence is MEKSQSSPTKDASTKQKNVDDWLPITSSRNAK. Residues 33-53 form a helical membrane-spanning segment; it reads WWYSAFHNVTAMVGAGVLSLP. Residues 54–58 are Extracellular-facing; it reads YAMSN. Residues 59–79 form a helical membrane-spanning segment; the sequence is LGWGPGVTIMIMSWLITFYTL. Topologically, residues 80–110 are cytoplasmic; sequence WQMVQMHEMVPGKRFDRYHELGQHAFGEKLG. The chain crosses the membrane as a helical span at residues 111–131; the sequence is LWIVVPQQLIVEVGVDIVYMV. At 132–155 the chain is on the extracellular side; the sequence is TGGKSLKKIHDLLCTDCKNIRTTY. 2 helical membrane passes run 156-176 and 177-197; these read WIMI…FNSI and SIVS…AWAT. Topologically, residues 198–222 are extracellular; the sequence is SVKKGVHPNVDYSSRASTTSGNVFN. A helical transmembrane segment spans residues 223-243; it reads FLNALGDVAFAYAGHNVVLEI. At 244-264 the chain is on the cytoplasmic side; the sequence is QATIPSTPEKPSKIAMWKGVV. The chain crosses the membrane as a helical span at residues 265-285; the sequence is VAYIVVAICYFPVAFVCYYIF. Over 286 to 300 the chain is Extracellular; sequence GNSVDDNILMTLEKP. Residues 301 to 321 traverse the membrane as a helical segment; that stretch reads IWLIAIANAFVVVHVIGSYQI. At 322–347 the chain is on the cytoplasmic side; it reads YAMPVFDMLETFLVKKMMFAPSFKLR. Residues 348-370 form a helical membrane-spanning segment; that stretch reads FITRTLYVAFTMFVAICIPFFGG. Topologically, residues 371 to 373 are extracellular; it reads LLG. Residues 374 to 396 form a helical membrane-spanning segment; sequence FFGGFAFAPTTYYLPCIMWLCIK. Residues 397–406 lie on the Cytoplasmic side of the membrane; the sequence is KPKKYGLSWC. The helical transmembrane segment at 407–427 threads the bilayer; that stretch reads INWFCIVVGVILTILAPIGGL. Residues 428-441 are Extracellular-facing; sequence RTIIISAKNYEFFS.

This sequence belongs to the amino acid/polyamine transporter 2 family. Amino acid/auxin permease (AAAP) (TC 2.A.18.2) subfamily.

The protein resides in the cell membrane. In terms of biological role, amino acid transporter. The chain is Lysine histidine transporter-like 2 from Arabidopsis thaliana (Mouse-ear cress).